The following is a 305-amino-acid chain: Porphobilinogen deaminase (305 aa).

C240 is subject to S-(dipyrrolylmethanemethyl)cysteine.

It belongs to the HMBS family. In terms of assembly, monomer. Dipyrromethane serves as cofactor.

The catalysed reaction is 4 porphobilinogen + H2O = hydroxymethylbilane + 4 NH4(+). The protein operates within porphyrin-containing compound metabolism; protoporphyrin-IX biosynthesis; coproporphyrinogen-III from 5-aminolevulinate: step 2/4. Tetrapolymerization of the monopyrrole PBG into the hydroxymethylbilane pre-uroporphyrinogen in several discrete steps. The sequence is that of Porphobilinogen deaminase from Xylella fastidiosa (strain M23).